Here is a 203-residue protein sequence, read N- to C-terminus: GTP cyclohydrolase 1 (203 aa).

Residues C87, H90, and C158 each contribute to the Zn(2+) site.

The protein belongs to the GTP cyclohydrolase I family. In terms of assembly, toroid-shaped homodecamer, composed of two pentamers of five dimers.

The catalysed reaction is GTP + H2O = 7,8-dihydroneopterin 3'-triphosphate + formate + H(+). The protein operates within cofactor biosynthesis; 7,8-dihydroneopterin triphosphate biosynthesis; 7,8-dihydroneopterin triphosphate from GTP: step 1/1. This chain is GTP cyclohydrolase 1, found in Xylella fastidiosa (strain 9a5c).